The chain runs to 403 residues: Decapping and exoribonuclease protein 1 (403 aa).

A divalent metal cation is bound at residue Glu223. Glu260 contacts substrate. Residues Asp262, Glu273, and Ile274 each coordinate a divalent metal cation. 2 residues coordinate substrate: Lys275 and Gln297.

This sequence belongs to the DXO/Dom3Z family. The cofactor is a divalent metal cation.

Its subcellular location is the cytoplasm. It carries out the reaction a 5'-end NAD(+)-phospho-ribonucleoside in mRNA + H2O = a 5'-end phospho-ribonucleoside in mRNA + NAD(+) + H(+). It catalyses the reaction a 5'-end (N(7)-methyl 5'-triphosphoguanosine)-ribonucleoside-ribonucleotide in mRNA + H2O = a (N(7)-methyl 5'-triphosphoguanosine)-nucleoside + a 5'-end phospho-ribonucleoside in mRNA + H(+). In terms of biological role, decapping enzyme for NAD-capped RNAs: specifically hydrolyzes the nicotinamide adenine dinucleotide (NAD) cap from a subset of RNAs by removing the entire NAD moiety from the 5'-end of an NAD-capped RNA. The NAD-cap is present at the 5'-end of some RNAs and snoRNAs. In contrast to the canonical 5'-end N7 methylguanosine (m7G) cap, the NAD cap promotes mRNA decay. Also acts as a non-canonical decapping enzyme that removes the entire cap structure of m7G capped or incompletely capped RNAs and mediates their subsequent degradation. Has decapping and 5'-3' exonuclease activities. Has decapping activity toward incomplete 5'-end cap mRNAs such as unmethylated 5'-end-capped RNA to release GpppN and 5'-end monophosphate RNA. The 5'-end monophosphate RNA is then degraded by the 5'-3' exoribonuclease activity, enabling this enzyme to decap and degrade incompletely capped mRNAs. In Kluyveromyces lactis (strain ATCC 8585 / CBS 2359 / DSM 70799 / NBRC 1267 / NRRL Y-1140 / WM37) (Yeast), this protein is Decapping and exoribonuclease protein 1.